We begin with the raw amino-acid sequence, 416 residues long: D-amino acid dehydrogenase (416 aa).

Residue 3-17 (ITILGSGVIGVTTAY) coordinates FAD.

This sequence belongs to the DadA oxidoreductase family. FAD serves as cofactor.

It catalyses the reaction a D-alpha-amino acid + A + H2O = a 2-oxocarboxylate + AH2 + NH4(+). It participates in amino-acid degradation; D-alanine degradation; NH(3) and pyruvate from D-alanine: step 1/1. Functionally, oxidative deamination of D-amino acids. This Brucella canis (strain ATCC 23365 / NCTC 10854 / RM-666) protein is D-amino acid dehydrogenase.